A 93-amino-acid chain; its full sequence is Defensin-like protein 209 (93 aa).

The signal sequence occupies residues 1–19 (MKITILFLTLLVLSSSCTS). Intrachain disulfides connect Cys63–Cys80, Cys66–Cys85, and Cys70–Cys87.

It belongs to the DEFL family.

It is found in the secreted. The chain is Defensin-like protein 209 from Arabidopsis thaliana (Mouse-ear cress).